We begin with the raw amino-acid sequence, 32 residues long: Putative leucine-rich repeat protein PS14 (32 aa).

The protein is Putative leucine-rich repeat protein PS14 of Pinus strobus (Eastern white pine).